The sequence spans 494 residues: Syntaphilin (494 aa).

The interval Met-1–Tyr-75 is disordered. The segment covering Gly-7 to Ser-49 has biased composition (low complexity). Residues Leu-79–Lys-161 adopt a coiled-coil conformation. Disordered stretches follow at residues Met-191–Ala-246 and Cys-338–Val-398. Phosphoserine is present on residues Ser-200 and Ser-204. Over residues Arg-207 to Lys-217 the composition is skewed to polar residues. Thr-214 is modified (phosphothreonine). Ser-219 carries the post-translational modification Phosphoserine. Residues Gly-230–Ala-246 are compositionally biased toward low complexity. Residues Ser-344 to Ala-353 show a composition bias toward basic and acidic residues. A helical transmembrane segment spans residues Tyr-425 to Cys-444.

Binds to STX1A. Interacts with DNM1; this interaction inhibits the binding of DNM1 to AMPH and DNM1-receptor-mediated endocytosis. As to expression, brain specific. Found in synapses.

Its subcellular location is the membrane. The protein localises to the synapse. The protein resides in the synaptosome. Functionally, inhibits SNARE complex formation by absorbing free STX1A. The polypeptide is Syntaphilin (Homo sapiens (Human)).